We begin with the raw amino-acid sequence, 451 residues long: Aminodeoxychorismate synthase component 1 (451 aa).

L-tryptophan contacts are provided by residues S34, 41–44 (HNRF), and 238–240 (PFS). Catalysis depends on E256, which acts as the Proton donor. K272 acts as the N6-(4-deoxychorismate)-lysine intermediate in catalysis.

This sequence belongs to the anthranilate synthase component I family. As to quaternary structure, monomer. Heterodimer consisting of two non-identical subunits: a glutamine amidotransferase subunit (PabA) and a aminodeoxychorismate synthase subunit (PabB). Mg(2+) serves as cofactor.

The catalysed reaction is chorismate + L-glutamine = 4-amino-4-deoxychorismate + L-glutamate. The protein operates within cofactor biosynthesis; tetrahydrofolate biosynthesis; 4-aminobenzoate from chorismate: step 1/2. Its function is as follows. Part of a heterodimeric complex that catalyzes the two-step biosynthesis of 4-amino-4-deoxychorismate (ADC), a precursor of p-aminobenzoate (PABA) and tetrahydrofolate. In the first step, a glutamine amidotransferase (PabA) generates ammonia as a substrate that, along with chorismate, is used in the second step, catalyzed by aminodeoxychorismate synthase (PabB) to produce ADC. The polypeptide is Aminodeoxychorismate synthase component 1 (pabB) (Klebsiella aerogenes (Enterobacter aerogenes)).